The chain runs to 445 residues: Phosphoglucosamine mutase (445 aa).

The active-site Phosphoserine intermediate is the serine 99. Residues serine 99, aspartate 242, aspartate 244, and aspartate 246 each coordinate Mg(2+). Phosphoserine is present on serine 99.

This sequence belongs to the phosphohexose mutase family. It depends on Mg(2+) as a cofactor. Activated by phosphorylation.

It catalyses the reaction alpha-D-glucosamine 1-phosphate = D-glucosamine 6-phosphate. Its function is as follows. Catalyzes the conversion of glucosamine-6-phosphate to glucosamine-1-phosphate. This chain is Phosphoglucosamine mutase, found in Helicobacter pylori (strain P12).